The sequence spans 262 residues: Type III pantothenate kinase (262 aa).

Asp6–Val13 contributes to the ATP binding site. Substrate is bound by residues Tyr100 and Gly107–Arg110. The active-site Proton acceptor is Asp109. Asp129 serves as a coordination point for K(+). Position 132 (Thr132) interacts with ATP. Substrate is bound at residue Thr184.

This sequence belongs to the type III pantothenate kinase family. In terms of assembly, homodimer. The cofactor is NH4(+). Requires K(+) as cofactor.

It is found in the cytoplasm. It carries out the reaction (R)-pantothenate + ATP = (R)-4'-phosphopantothenate + ADP + H(+). It functions in the pathway cofactor biosynthesis; coenzyme A biosynthesis; CoA from (R)-pantothenate: step 1/5. Its function is as follows. Catalyzes the phosphorylation of pantothenate (Pan), the first step in CoA biosynthesis. This Bacillus cytotoxicus (strain DSM 22905 / CIP 110041 / 391-98 / NVH 391-98) protein is Type III pantothenate kinase.